Reading from the N-terminus, the 214-residue chain is MDWMWLLSGACIVFTLGMFSSGLSDLRVMVAKRSVENIQFLPFLTTDLNNLGWFYYGYLKGDGTLIIVNLIGASLQTLYMAAYILYSLERRYVVSQVLVSLGVLFLAHCYFTLWTPDINSRLNQLGLFCSIFTISMYLSPLADLAQIIKSKSTKCLSFPLTVATFLTSTSWVLYGWVQSDLYITVPNFPGIVTSLLRFWLFSRYPPDQPAYSLL.

The next 7 membrane-spanning stretches (helical) occupy residues 3–23 (WMWLLSGACIVFTLGMFSSGL), 38–58 (IQFLPFLTTDLNNLGWFYYGY), 65–85 (LIIVNLIGASLQTLYMAAYIL), 93–113 (VVSQVLVSLGVLFLAHCYFTL), 125–145 (LGLFCSIFTISMYLSPLADLA), 157–177 (SFPLTVATFLTSTSWVLYGWV), and 181–201 (LYITVPNFPGIVTSLLRFWLF). In terms of domain architecture, MtN3/slv 1 spans 6-89 (LLSGACIVFT…MAAYILYSLE (84 aa)). In terms of domain architecture, MtN3/slv 2 spans 124–207 (QLGLFCSIFT…FWLFSRYPPD (84 aa)).

Belongs to the SWEET sugar transporter family.

It is found in the golgi apparatus membrane. The protein resides in the cell membrane. In terms of biological role, mediates sugar transport across membranes. This chain is Sugar transporter SWEET1 (slc50a1), found in Xenopus tropicalis (Western clawed frog).